Reading from the N-terminus, the 398-residue chain is Putative F-box/kelch-repeat protein At2g29780 (398 aa).

Residues 1-46 (MAIISETSDDGSHGGVPNKKPEELHKNPKEDDHQEEEVENHPPIPR) are disordered. Residues 19 to 32 (KKPEELHKNPKEDD) show a composition bias toward basic and acidic residues. Positions 43–90 (PIPRQIPQALIRRTVALIKRCHYPSLSLLSKAFRIVISSPELHQTRSS) constitute an F-box domain. Kelch repeat units lie at residues 148–195 (KMYV…VING), 196–241 (KIYV…GFVT), 243–289 (VVMQ…VIED), and 295–342 (DPYC…GGKL).

This Arabidopsis thaliana (Mouse-ear cress) protein is Putative F-box/kelch-repeat protein At2g29780.